The sequence spans 434 residues: Enolase (434 aa).

A disordered region spans residues 29–56 (SGHTGRAAVPSGASTGSREALEMRDGDK). Over residues 47 to 56 (EALEMRDGDK) the composition is skewed to basic and acidic residues. (2R)-2-phosphoglycerate is bound at residue Gln163. The active-site Proton donor is the Glu205. 3 residues coordinate Mg(2+): Asp242, Glu285, and Asp312. The (2R)-2-phosphoglycerate site is built by Lys337, Arg366, Ser367, and Lys388. The active-site Proton acceptor is Lys337.

The protein belongs to the enolase family. Homooctamer. Requires Mg(2+) as cofactor.

The protein resides in the cytoplasm. The protein localises to the secreted. Its subcellular location is the cell surface. It carries out the reaction (2R)-2-phosphoglycerate = phosphoenolpyruvate + H2O. The protein operates within carbohydrate degradation; glycolysis; pyruvate from D-glyceraldehyde 3-phosphate: step 4/5. Its function is as follows. Catalyzes the reversible conversion of 2-phosphoglycerate (2-PG) into phosphoenolpyruvate (PEP). It is essential for the degradation of carbohydrates via glycolysis. In Nitratidesulfovibrio vulgaris (strain DSM 19637 / Miyazaki F) (Desulfovibrio vulgaris), this protein is Enolase.